The following is a 138-amino-acid chain: Transcription antitermination protein NusB (138 aa).

The protein belongs to the NusB family.

Functionally, involved in transcription antitermination. Required for transcription of ribosomal RNA (rRNA) genes. Binds specifically to the boxA antiterminator sequence of the ribosomal RNA (rrn) operons. The polypeptide is Transcription antitermination protein NusB (Coxiella burnetii (strain CbuK_Q154) (Coxiella burnetii (strain Q154))).